We begin with the raw amino-acid sequence, 179 residues long: Ubiquitin-conjugating enzyme E2 C (179 aa).

A disordered region spans residues 1–31 (MASQNRDPVAASVAAARKGAEPSGGAARGPV). Position 2 is an N-acetylalanine (A2). S3 is subject to Phosphoserine. The 146-residue stretch at 30-175 (PVGKRLQQEL…LQETYSKQVS (146 aa)) folds into the UBC core domain. Catalysis depends on C114, which acts as the Glycyl thioester intermediate.

This sequence belongs to the ubiquitin-conjugating enzyme family. As to quaternary structure, component of the APC/C complex, composed of at least 14 distinct subunits that assemble into a complex of at least 19 chains with a combined molecular mass of around 1.2 MDa. Within this complex, directly interacts with ANAPC2. Post-translationally, autoubiquitinated by the APC/C complex, leading to its degradation by the proteasome. Its degradation plays a central role in APC/C regulation, allowing cyclin-A accumulation before S phase entry. APC/C substrates inhibit the autoubiquitination of UBE2C/UBCH10 but not its E2 function, hence APC/C remaining active until its substrates have been destroyed.

It catalyses the reaction S-ubiquitinyl-[E1 ubiquitin-activating enzyme]-L-cysteine + [E2 ubiquitin-conjugating enzyme]-L-cysteine = [E1 ubiquitin-activating enzyme]-L-cysteine + S-ubiquitinyl-[E2 ubiquitin-conjugating enzyme]-L-cysteine.. The enzyme catalyses S-ubiquitinyl-[E1 ubiquitin-activating enzyme]-L-cysteine + [acceptor protein]-L-lysine = [E1 ubiquitin-activating enzyme]-L-cysteine + N(6)-monoubiquitinyl-[acceptor protein]-L-lysine.. It functions in the pathway protein modification; protein ubiquitination. Accepts ubiquitin from the E1 complex and catalyzes its covalent attachment to other proteins. In vitro catalyzes 'Lys-11'- and 'Lys-48'-linked polyubiquitination. Acts as an essential factor of the anaphase promoting complex/cyclosome (APC/C), a cell cycle-regulated ubiquitin ligase that controls progression through mitosis. Acts by initiating 'Lys-11'-linked polyubiquitin chains on APC/C substrates, leading to the degradation of APC/C substrates by the proteasome and promoting mitotic exit. The protein is Ubiquitin-conjugating enzyme E2 C (UBE2C) of Bos taurus (Bovine).